Here is a 141-residue protein sequence, read N- to C-terminus: Hemoglobin subunit alpha (141 aa).

One can recognise a Globin domain in the interval 1–141 (VLSAADKSNV…VSTVLTSKYR (141 aa)). Ser-3 is subject to Phosphoserine. N6-succinyllysine is present on residues Lys-7 and Lys-11. An N6-acetyllysine; alternate modification is found at Lys-16. Lys-16 is modified (N6-succinyllysine; alternate). Tyr-24 is modified (phosphotyrosine). The residue at position 35 (Ser-35) is a Phosphoserine. Lys-40 carries the post-translational modification N6-succinyllysine. Residue Ser-49 is modified to Phosphoserine. His-58 lines the O2 pocket. His-87 contacts heme b. Position 102 is a phosphoserine (Ser-102). At Thr-108 the chain carries Phosphothreonine. Ser-124 carries the post-translational modification Phosphoserine. A phosphothreonine mark is found at Thr-134 and Thr-137. Position 138 is a phosphoserine (Ser-138).

It belongs to the globin family. Heterotetramer of two alpha chains and two beta chains. As to expression, red blood cells.

Functionally, involved in oxygen transport from the lung to the various peripheral tissues. Its function is as follows. Hemopressin acts as an antagonist peptide of the cannabinoid receptor CNR1. Hemopressin-binding efficiently blocks cannabinoid receptor CNR1 and subsequent signaling. The sequence is that of Hemoglobin subunit alpha (HBA) from Rangifer tarandus (Reindeer).